The sequence spans 289 residues: Pyridoxal kinase PdxY (289 aa).

Substrate-binding positions include serine 9 and 44–45 (TQ). ATP is bound by residues aspartate 112, valine 144, glutamate 149, and lysine 182. Aspartate 221 provides a ligand contact to substrate.

This sequence belongs to the pyridoxine kinase family. PdxY subfamily. Homodimer. The cofactor is Mg(2+).

The enzyme catalyses pyridoxal + ATP = pyridoxal 5'-phosphate + ADP + H(+). It functions in the pathway cofactor metabolism; pyridoxal 5'-phosphate salvage; pyridoxal 5'-phosphate from pyridoxal: step 1/1. Pyridoxal kinase involved in the salvage pathway of pyridoxal 5'-phosphate (PLP). Catalyzes the phosphorylation of pyridoxal to PLP. This Vibrio campbellii (strain ATCC BAA-1116) protein is Pyridoxal kinase PdxY.